The sequence spans 277 residues: MSKSLKKLVEESREKNQPEVDMSDRGISNMLDINGLFTLSHITQLVLSHNKLTTVPPNIAELKNLEVLNFFNNQIEELPTQISSLQKLKHLNLGMNRLNTLPRGFGSLPALEVLDLTYNNLNENSLPGNFFYLTTLRALYLSDNDFEILPPDIGKLTKLQILSLRDNDLISLPKEIGELTQLKELHIQGNRLTVLPPELGNLDLTGQKQIFKAENNPWVTPIADQFQLGVSHVFEYIRSETYKYLYGRHMQANPEPPKKNNDKSKKISRKPLAAKNK.

Residues 1 to 23 (MSKSLKKLVEESREKNQPEVDMS) form a disordered region. S2 is subject to N-acetylserine. Residues 7–23 (KLVEESREKNQPEVDMS) show a composition bias toward basic and acidic residues. 7 LRR repeats span residues 41 to 63 (HITQ…AELK), 64 to 85 (NLEV…ISSL), 87 to 109 (KLKH…GSLP), 110 to 133 (ALEV…FFYL), 135 to 156 (TLRA…IGKL), 158 to 179 (KLQI…IGEL), and 181 to 202 (QLKE…LGNL). The disordered stretch occupies residues 250–277 (MQANPEPPKKNNDKSKKISRKPLAAKNK). Basic and acidic residues predominate over residues 256–265 (PPKKNNDKSK).

In terms of biological role, potentially plays a role in the Ras signal transduction pathway. Capable of suppressing v-Ras transformation in vitro. This is Ras suppressor protein 1 (RSU1) from Bos taurus (Bovine).